The following is a 487-amino-acid chain: 1-aminocyclopropane-1-carboxylate synthase 1 (487 aa).

An N6-(pyridoxal phosphate)lysine modification is found at lysine 286.

This sequence belongs to the class-I pyridoxal-phosphate-dependent aminotransferase family. As to quaternary structure, homodimer. It depends on pyridoxal 5'-phosphate as a cofactor.

It catalyses the reaction S-adenosyl-L-methionine = 1-aminocyclopropane-1-carboxylate + S-methyl-5'-thioadenosine + H(+). The protein operates within alkene biosynthesis; ethylene biosynthesis via S-adenosyl-L-methionine; ethylene from S-adenosyl-L-methionine: step 1/2. In terms of biological role, catalyzes the formation of 1-aminocyclopropane-1-carboxylate, a direct precursor of ethylene in higher plants. This is 1-aminocyclopropane-1-carboxylate synthase 1 (ACC1) from Oryza sativa subsp. indica (Rice).